The chain runs to 330 residues: tRNA U34 carboxymethyltransferase (330 aa).

Carboxy-S-adenosyl-L-methionine is bound by residues lysine 91, tryptophan 105, lysine 110, glycine 130, 152-154 (DPS), 181-182 (IE), methionine 196, tyrosine 200, and arginine 315.

The protein belongs to the class I-like SAM-binding methyltransferase superfamily. CmoB family. Homotetramer.

The enzyme catalyses carboxy-S-adenosyl-L-methionine + 5-hydroxyuridine(34) in tRNA = 5-carboxymethoxyuridine(34) in tRNA + S-adenosyl-L-homocysteine + H(+). Catalyzes carboxymethyl transfer from carboxy-S-adenosyl-L-methionine (Cx-SAM) to 5-hydroxyuridine (ho5U) to form 5-carboxymethoxyuridine (cmo5U) at position 34 in tRNAs. This is tRNA U34 carboxymethyltransferase from Shewanella oneidensis (strain ATCC 700550 / JCM 31522 / CIP 106686 / LMG 19005 / NCIMB 14063 / MR-1).